Reading from the N-terminus, the 144-residue chain is Phosphomevalonate dehydratase small subunit (144 aa).

The active-site Proton acceptor is the Ser-65.

Belongs to the AcnX type II small subunit family. In terms of assembly, heterodimer composed of a large subunit (PMDh-L) and a small subunit (PMDh-S).

It catalyses the reaction (R)-5-phosphomevalonate = (2E)-3-methyl-5-phosphooxypent-2-enoate + H2O. The protein operates within isoprenoid biosynthesis; isopentenyl diphosphate biosynthesis via mevalonate pathway. Component of a hydro-lyase that catalyzes the dehydration of mevalonate 5-phosphate (MVA5P) to form trans-anhydromevalonate 5-phosphate (tAHMP). Involved in the archaeal mevalonate (MVA) pathway, which provides fundamental precursors for isoprenoid biosynthesis, such as isopentenyl diphosphate (IPP) and dimethylallyl diphosphate (DMAPP). The protein is Phosphomevalonate dehydratase small subunit of Methanosarcina mazei (strain ATCC BAA-159 / DSM 3647 / Goe1 / Go1 / JCM 11833 / OCM 88) (Methanosarcina frisia).